The primary structure comprises 281 residues: Proteasome subunit beta (281 aa).

A propeptide spans 1–53 (MEANTRSTGRLPAAFLTPGSSSFMDFLSDHQPELLPGKRQLPPTQGVIEAPHG) (removed in mature form; by autocatalysis). Catalysis depends on Thr-54, which acts as the Nucleophile.

Belongs to the peptidase T1B family. As to quaternary structure, the 20S proteasome core is composed of 14 alpha and 14 beta subunits that assemble into four stacked heptameric rings, resulting in a barrel-shaped structure. The two inner rings, each composed of seven catalytic beta subunits, are sandwiched by two outer rings, each composed of seven alpha subunits. The catalytic chamber with the active sites is on the inside of the barrel. Has a gated structure, the ends of the cylinder being occluded by the N-termini of the alpha-subunits. Is capped by the proteasome-associated ATPase, ARC.

It is found in the cytoplasm. The enzyme catalyses Cleavage of peptide bonds with very broad specificity.. It participates in protein degradation; proteasomal Pup-dependent pathway. Its activity is regulated as follows. The formation of the proteasomal ATPase ARC-20S proteasome complex, likely via the docking of the C-termini of ARC into the intersubunit pockets in the alpha-rings, may trigger opening of the gate for substrate entry. Interconversion between the open-gate and close-gate conformations leads to a dynamic regulation of the 20S proteasome proteolysis activity. Its function is as follows. Component of the proteasome core, a large protease complex with broad specificity involved in protein degradation. The sequence is that of Proteasome subunit beta from Streptomyces scabiei (strain 87.22).